We begin with the raw amino-acid sequence, 100 residues long: Phosphoribosyl-ATP pyrophosphatase (100 aa).

Belongs to the PRA-PH family.

It is found in the cytoplasm. The enzyme catalyses 1-(5-phospho-beta-D-ribosyl)-ATP + H2O = 1-(5-phospho-beta-D-ribosyl)-5'-AMP + diphosphate + H(+). It participates in amino-acid biosynthesis; L-histidine biosynthesis; L-histidine from 5-phospho-alpha-D-ribose 1-diphosphate: step 2/9. This Haloquadratum walsbyi (strain DSM 16790 / HBSQ001) protein is Phosphoribosyl-ATP pyrophosphatase.